The following is a 1060-amino-acid chain: Isoleucine--tRNA ligase (1060 aa).

The 'HIGH' region signature appears at 55 to 65 (PTANGTPGVHH). The 'KMSKS' region motif lies at 608 to 612 (KMSKH). Lys-611 lines the ATP pocket.

The protein belongs to the class-I aminoacyl-tRNA synthetase family. IleS type 2 subfamily. In terms of assembly, monomer. Zn(2+) serves as cofactor.

Its subcellular location is the cytoplasm. It carries out the reaction tRNA(Ile) + L-isoleucine + ATP = L-isoleucyl-tRNA(Ile) + AMP + diphosphate. Functionally, catalyzes the attachment of isoleucine to tRNA(Ile). As IleRS can inadvertently accommodate and process structurally similar amino acids such as valine, to avoid such errors it has two additional distinct tRNA(Ile)-dependent editing activities. One activity is designated as 'pretransfer' editing and involves the hydrolysis of activated Val-AMP. The other activity is designated 'posttransfer' editing and involves deacylation of mischarged Val-tRNA(Ile). This is Isoleucine--tRNA ligase from Thermobifida fusca (strain YX).